The chain runs to 477 residues: Alanine--glyoxylate aminotransferase 2 homolog 2, mitochondrial (477 aa).

The transit peptide at 1–22 (MQRFAAKRSVQNISVSLWRRCI) directs the protein to the mitochondrion. Pyridoxal 5'-phosphate-binding positions include 165 to 166 (GT), Y192, and 292 to 295 (DEVQ). K321 carries the N6-(pyridoxal phosphate)lysine modification. A pyridoxal 5'-phosphate-binding site is contributed by T350.

It belongs to the class-III pyridoxal-phosphate-dependent aminotransferase family. In terms of assembly, homotetramer. Interacts with GRF3. It depends on pyridoxal 5'-phosphate as a cofactor.

It localises to the mitochondrion. It catalyses the reaction glyoxylate + L-alanine = glycine + pyruvate. The protein is Alanine--glyoxylate aminotransferase 2 homolog 2, mitochondrial (AGT3) of Arabidopsis thaliana (Mouse-ear cress).